Reading from the N-terminus, the 297-residue chain is MNVQTMILTLQEYWSKQNCILLQAYDTEKGAGTMSPYTMLRTIGPEPWNVAYVEPSRRPADGRYGENPNRLYQHHQFQVIMKPSPTNIQELYLDSLRALGINPLEHDIRFVEDNWENPSLGCAGLGWEVWLDGMEITQFTYFQQVGGLEANPVSAEITYGLERLASYIQDKENVFDLEWVEGFTYGDIFTQPEYEHSKYTFEVSDSAMLFELFSTYEKEADRALEENLVFPAYDYVLKCSHTFNLLDARGAISVTERTGYIGRVRNLARKCAKKYYEEREKLGFPMLKNKEADHEQA.

Belongs to the class-II aminoacyl-tRNA synthetase family. Tetramer of two alpha and two beta subunits.

The protein localises to the cytoplasm. It catalyses the reaction tRNA(Gly) + glycine + ATP = glycyl-tRNA(Gly) + AMP + diphosphate. The protein is Glycine--tRNA ligase alpha subunit (glyQ) of Halalkalibacterium halodurans (strain ATCC BAA-125 / DSM 18197 / FERM 7344 / JCM 9153 / C-125) (Bacillus halodurans).